We begin with the raw amino-acid sequence, 175 residues long: Small ribosomal subunit protein uS7 (175 aa).

The protein belongs to the universal ribosomal protein uS7 family. Part of the 30S ribosomal subunit. Contacts proteins S9 and S11.

Functionally, one of the primary rRNA binding proteins, it binds directly to 16S rRNA where it nucleates assembly of the head domain of the 30S subunit. Is located at the subunit interface close to the decoding center, probably blocks exit of the E-site tRNA. This Neorickettsia sennetsu (strain ATCC VR-367 / Miyayama) (Ehrlichia sennetsu) protein is Small ribosomal subunit protein uS7.